The chain runs to 318 residues: tRNA uridine(34) hydroxylase (318 aa).

In terms of domain architecture, Rhodanese spans 123–217; the sequence is EDDDTVIIDA…YGKDPETKGQ (95 aa). C177 serves as the catalytic Cysteine persulfide intermediate.

It belongs to the TrhO family.

It carries out the reaction uridine(34) in tRNA + AH2 + O2 = 5-hydroxyuridine(34) in tRNA + A + H2O. In terms of biological role, catalyzes oxygen-dependent 5-hydroxyuridine (ho5U) modification at position 34 in tRNAs. The sequence is that of tRNA uridine(34) hydroxylase from Staphylococcus aureus (strain MRSA252).